A 355-amino-acid chain; its full sequence is Methionine import ATP-binding protein MetN 1 (355 aa).

An ABC transporter domain is found at 6-245; the sequence is IDLKDIAVTF…PKAPLTVDFV (240 aa). Residue 42 to 49 participates in ATP binding; sequence GYSGAGKS.

Belongs to the ABC transporter superfamily. Methionine importer (TC 3.A.1.24) family. The complex is composed of two ATP-binding proteins (MetN), two transmembrane proteins (MetI) and a solute-binding protein (MetQ).

It localises to the cell membrane. The enzyme catalyses L-methionine(out) + ATP + H2O = L-methionine(in) + ADP + phosphate + H(+). It carries out the reaction D-methionine(out) + ATP + H2O = D-methionine(in) + ADP + phosphate + H(+). Part of the ABC transporter complex MetNIQ involved in methionine import. Responsible for energy coupling to the transport system. This Lactiplantibacillus plantarum (strain ATCC BAA-793 / NCIMB 8826 / WCFS1) (Lactobacillus plantarum) protein is Methionine import ATP-binding protein MetN 1.